The following is a 164-amino-acid chain: Disulfide bond formation protein B (164 aa).

The Cytoplasmic portion of the chain corresponds to 1–9 (MTLPSARTC). The helical transmembrane segment at 10–26 (FLLGFLFCAALLAAALY) threads the bilayer. Residues 27–44 (FQFSGGLEPCPLCISQRI) are Periplasmic-facing. A disulfide bridge links C36 with C39. The chain crosses the membrane as a helical span at residues 45-61 (MVLAVALVFLAAAIHHP). The Cytoplasmic portion of the chain corresponds to 62-68 (ASLGIRA). A helical membrane pass occupies residues 69–85 (YALLGTAVALGGASISG). Residues 86–142 (RHVWLLHLPPEEVPECGPGLSYMFRNFPLGDTLKAMLSGTGDCAKVDWTFLGLSMPA) lie on the Periplasmic side of the membrane. A disulfide bridge links C101 with C128. Residues 143–161 (WVLICFLGLGAFSLLQWWN) traverse the membrane as a helical segment. Residues 162-164 (AER) are Cytoplasmic-facing.

The protein belongs to the DsbB family.

The protein localises to the cell inner membrane. In terms of biological role, required for disulfide bond formation in some periplasmic proteins. Acts by oxidizing the DsbA protein. This chain is Disulfide bond formation protein B, found in Methylococcus capsulatus (strain ATCC 33009 / NCIMB 11132 / Bath).